The primary structure comprises 369 residues: Chorismate synthase (369 aa).

Residues arginine 48 and arginine 54 each coordinate NADP(+). FMN-binding positions include 125 to 127, 238 to 239, glycine 278, 293 to 297, and arginine 319; these read RSS, NA, and KPTSS.

The protein belongs to the chorismate synthase family. As to quaternary structure, homotetramer. It depends on FMNH2 as a cofactor.

It carries out the reaction 5-O-(1-carboxyvinyl)-3-phosphoshikimate = chorismate + phosphate. It functions in the pathway metabolic intermediate biosynthesis; chorismate biosynthesis; chorismate from D-erythrose 4-phosphate and phosphoenolpyruvate: step 7/7. Its function is as follows. Catalyzes the anti-1,4-elimination of the C-3 phosphate and the C-6 proR hydrogen from 5-enolpyruvylshikimate-3-phosphate (EPSP) to yield chorismate, which is the branch point compound that serves as the starting substrate for the three terminal pathways of aromatic amino acid biosynthesis. This reaction introduces a second double bond into the aromatic ring system. The sequence is that of Chorismate synthase from Cupriavidus necator (strain ATCC 17699 / DSM 428 / KCTC 22496 / NCIMB 10442 / H16 / Stanier 337) (Ralstonia eutropha).